The primary structure comprises 372 residues: General transcription factor IIH subunit 3 (372 aa).

The tract at residues 40-78 is disordered; it reads ISGMNDDNDSSSRYNGSTTIGNNNNNNNNNNSNNNNNVN. Residues 50–60 are compositionally biased toward polar residues; the sequence is SSRYNGSTTIG. A compositionally biased stretch (low complexity) spans 61-78; that stretch reads NNNNNNNNNNSNNNNNVN. The C4-type zinc-finger motif lies at 323-340; that stretch reads CSVCLSIFCGHSSSCSTC.

The protein belongs to the TFB4 family. In terms of assembly, component of the 7-subunit TFIIH core complex composed of XPB/repB, XPD/repD, gtf2h1, gtf2h2, gtf2h3, gtf2h4 and gtf2h5, which is active in NER. The core complex associates with the 3-subunit CDK-activating kinase (CAK) module composed of cycH/cyclin H, cdk7 and mnat1 to form the 10-subunit holoenzyme (holo-TFIIH) active in transcription.

The protein resides in the nucleus. Component of the general transcription and DNA repair factor IIH (TFIIH) core complex, which is involved in general and transcription-coupled nucleotide excision repair (NER) of damaged DNA and, when complexed to CAK, in RNA transcription by RNA polymerase II. In NER, TFIIH acts by opening DNA around the lesion to allow the excision of the damaged oligonucleotide and its replacement by a new DNA fragment. In transcription, TFIIH has an essential role in transcription initiation. When the pre-initiation complex (PIC) has been established, TFIIH is required for promoter opening and promoter escape. Phosphorylation of the C-terminal tail (CTD) of the largest subunit of RNA polymerase II by the kinase module CAK controls the initiation of transcription. In Dictyostelium discoideum (Social amoeba), this protein is General transcription factor IIH subunit 3 (gtf2h3).